Consider the following 335-residue polypeptide: Ornithine carbamoyltransferase, catabolic (335 aa).

Residues 59–62, Q86, R110, and 137–140 contribute to the carbamoyl phosphate site; these read STRT and HPTQ. Residues N169, D233, and 237–238 contribute to the L-ornithine site; that span reads SM. Residues 274 to 275 and R319 each bind carbamoyl phosphate; that span reads CL.

This sequence belongs to the aspartate/ornithine carbamoyltransferase superfamily. OTCase family.

It localises to the cytoplasm. The enzyme catalyses carbamoyl phosphate + L-ornithine = L-citrulline + phosphate + H(+). The protein operates within amino-acid degradation; L-arginine degradation via ADI pathway; carbamoyl phosphate from L-arginine: step 2/2. Reversibly catalyzes the transfer of the carbamoyl group from carbamoyl phosphate (CP) to the N(epsilon) atom of ornithine (ORN) to produce L-citrulline. The polypeptide is Ornithine carbamoyltransferase, catabolic (arcB) (Bacillus licheniformis (strain ATCC 14580 / DSM 13 / JCM 2505 / CCUG 7422 / NBRC 12200 / NCIMB 9375 / NCTC 10341 / NRRL NRS-1264 / Gibson 46)).